The following is a 380-amino-acid chain: Cytochrome b (380 aa).

4 helical membrane passes run 33 to 53 (FGSL…FLAM), 77 to 98 (WLIR…FLHV), 113 to 133 (WNMG…GYVL), and 178 to 198 (FFAF…VHLL). Histidine 83 and histidine 97 together coordinate heme b. Heme b-binding residues include histidine 182 and histidine 196. An a ubiquinone-binding site is contributed by histidine 201. Transmembrane regions (helical) follow at residues 226 to 246 (IKDF…TLFF), 288 to 308 (LGGV…PLLH), 320 to 340 (ITQI…WIGG), and 347 to 367 (FITI…IFMP).

Belongs to the cytochrome b family. As to quaternary structure, the cytochrome bc1 complex contains 11 subunits: 3 respiratory subunits (MT-CYB, CYC1 and UQCRFS1), 2 core proteins (UQCRC1 and UQCRC2) and 6 low-molecular weight proteins (UQCRH/QCR6, UQCRB/QCR7, UQCRQ/QCR8, UQCR10/QCR9, UQCR11/QCR10 and a cleavage product of UQCRFS1). This cytochrome bc1 complex then forms a dimer. Heme b serves as cofactor.

It is found in the mitochondrion inner membrane. Component of the ubiquinol-cytochrome c reductase complex (complex III or cytochrome b-c1 complex) that is part of the mitochondrial respiratory chain. The b-c1 complex mediates electron transfer from ubiquinol to cytochrome c. Contributes to the generation of a proton gradient across the mitochondrial membrane that is then used for ATP synthesis. This is Cytochrome b (MT-CYB) from Microtus oregoni (Creeping vole).